The following is a 166-amino-acid chain: T-cell surface glycoprotein CD3 zeta chain (166 aa).

Positions 1-21 (MKWTALVIVAVLQTQFPVTAA) are cleaved as a signal peptide. Topologically, residues 22–30 (QSFGLLDPK) are extracellular. Residues 31-51 (LCYLLDGILFIYGVIVTALFL) traverse the membrane as a helical segment. Residues 52 to 166 (RAKFSRSADA…ALHMQALPPR (115 aa)) are Cytoplasmic-facing. Phosphoserine is present on Ser-58. 3 ITAM domains span residues 61-89 (APAY…LDRR), 100-128 (PQRK…EIGM), and 133-161 (QRRR…LHMQ). Phosphotyrosine occurs at positions 64, 72, 83, 111, 123, 144, and 155. The disordered stretch occupies residues 126 to 156 (IGMKSDNQRRRGKGHDGVYQGLSTATKDTYD).

It belongs to the CD3Z/FCER1G family. The TCR-CD3 complex is composed of a CD3D/CD3E and a CD3G/CD3E heterodimers that preferentially associate with TCRalpha and TCRbeta, respectively, to form TCRalpha/CD3E/CD3G and TCRbeta/CD3G/CD3E trimers. In turn, the hexamer interacts with CD3Z homodimer to form the TCR-CD3 complex. Alternatively, TCRalpha and TCRbeta can be replaced by TCRgamma and TCRdelta. Interacts with SLA. Interacts with TRAT1. Interacts with DOCK2. Interacts with SLA2. Interacts with SHB. Interacts with ZAP70. Interacts (tyrosine phosphorylated) with SHC1 (via SH2 domain). Interacts with PTPRC. Interacts with CRK; this interaction regulates CD3Z phosphorylation. Interacts (on T cell side) with CD81, ICAM1 and CD9 at immunological synapses between antigen-presenting cells and T cells. Interacts with CD160. Interacts with LY6E. Interacts with LY6E. The signaling subunit of immunoglobulin gamma (IgG) Fc receptor complex. As a homodimer or a heterodimer with FCER1G, associates with the ligand binding subunit FCGR3A (via transmembrane domain); this interaction is a prerequisite for Fc receptor complex expression on the cell surface. Interacts with CD5. Phosphorylated on Tyr residues after T-cell receptor triggering by LCK in association with CD4/CD8.

It localises to the cell membrane. In terms of biological role, part of the TCR-CD3 complex present on T-lymphocyte cell surface that plays an essential role in adaptive immune response. When antigen presenting cells (APCs) activate T-cell receptor (TCR), TCR-mediated signals are transmitted across the cell membrane by the CD3 chains CD3D, CD3E, CD3G and CD3Z. All CD3 chains contain immunoreceptor tyrosine-based activation motifs (ITAMs) in their cytoplasmic domain. Upon TCR engagement, these motifs become phosphorylated by Src family protein tyrosine kinases LCK and FYN, resulting in the activation of downstream signaling pathways. CD3Z ITAMs phosphorylation creates multiple docking sites for the protein kinase ZAP70 leading to ZAP70 phosphorylation and its conversion into a catalytically active enzyme. Plays an important role in intrathymic T-cell differentiation. Additionally, participates in the activity-dependent synapse formation of retinal ganglion cells (RGCs) in both the retina and dorsal lateral geniculate nucleus (dLGN). This Ovis aries (Sheep) protein is T-cell surface glycoprotein CD3 zeta chain (CD247).